Consider the following 261-residue polypeptide: Cytochrome c oxidase subunit 3 (261 aa).

Topologically, residues 1–15 are mitochondrial matrix; that stretch reads MTHQTHAYHMVNPSP. The helical transmembrane segment at 16-34 threads the bilayer; it reads WPLTGALSALLMTSGLIMW. At 35–40 the chain is on the mitochondrial intermembrane side; it reads FHFNSM. A helical transmembrane segment spans residues 41–66; the sequence is TLLMLGLTTNMLTMYQWWRDIIREST. The Mitochondrial matrix segment spans residues 67 to 72; sequence FQGHHT. The chain crosses the membrane as a helical span at residues 73–105; that stretch reads SAVQKGLRYGMILFIISEVLFFTGFFWAFYHSS. Residues 106–128 are Mitochondrial intermembrane-facing; sequence LAPTPELGGCWPPTGIHPLNPLE. A helical membrane pass occupies residues 129-152; it reads VPLLNTSVLLASGVSITWAHHSLM. Over 153–155 the chain is Mitochondrial matrix; sequence EGN. Residues 156–183 traverse the membrane as a helical segment; the sequence is RNHMLQALFITIALGVYFTLLQASEYYE. The Mitochondrial intermembrane segment spans residues 184 to 190; sequence APFTISD. The helical transmembrane segment at 191 to 223 threads the bilayer; that stretch reads GVYGSTFFVATGFHGLHVIIGSTFLIVCFFRQL. The Mitochondrial matrix portion of the chain corresponds to 224–232; the sequence is KFHFTSTHH. Residues 233–256 form a helical membrane-spanning segment; sequence FGFEAAAWYWHFVDVVWLFLYVSI. At 257–261 the chain is on the mitochondrial intermembrane side; the sequence is YWWGS.

It belongs to the cytochrome c oxidase subunit 3 family. Component of the cytochrome c oxidase (complex IV, CIV), a multisubunit enzyme composed of 14 subunits. The complex is composed of a catalytic core of 3 subunits MT-CO1, MT-CO2 and MT-CO3, encoded in the mitochondrial DNA, and 11 supernumerary subunits COX4I, COX5A, COX5B, COX6A, COX6B, COX6C, COX7A, COX7B, COX7C, COX8 and NDUFA4, which are encoded in the nuclear genome. The complex exists as a monomer or a dimer and forms supercomplexes (SCs) in the inner mitochondrial membrane with NADH-ubiquinone oxidoreductase (complex I, CI) and ubiquinol-cytochrome c oxidoreductase (cytochrome b-c1 complex, complex III, CIII), resulting in different assemblies (supercomplex SCI(1)III(2)IV(1) and megacomplex MCI(2)III(2)IV(2)).

The protein resides in the mitochondrion inner membrane. It carries out the reaction 4 Fe(II)-[cytochrome c] + O2 + 8 H(+)(in) = 4 Fe(III)-[cytochrome c] + 2 H2O + 4 H(+)(out). Its function is as follows. Component of the cytochrome c oxidase, the last enzyme in the mitochondrial electron transport chain which drives oxidative phosphorylation. The respiratory chain contains 3 multisubunit complexes succinate dehydrogenase (complex II, CII), ubiquinol-cytochrome c oxidoreductase (cytochrome b-c1 complex, complex III, CIII) and cytochrome c oxidase (complex IV, CIV), that cooperate to transfer electrons derived from NADH and succinate to molecular oxygen, creating an electrochemical gradient over the inner membrane that drives transmembrane transport and the ATP synthase. Cytochrome c oxidase is the component of the respiratory chain that catalyzes the reduction of oxygen to water. Electrons originating from reduced cytochrome c in the intermembrane space (IMS) are transferred via the dinuclear copper A center (CU(A)) of subunit 2 and heme A of subunit 1 to the active site in subunit 1, a binuclear center (BNC) formed by heme A3 and copper B (CU(B)). The BNC reduces molecular oxygen to 2 water molecules using 4 electrons from cytochrome c in the IMS and 4 protons from the mitochondrial matrix. In Damaliscus lunatus (Tsessebe), this protein is Cytochrome c oxidase subunit 3 (MT-CO3).